A 310-amino-acid polypeptide reads, in one-letter code: Ribonuclease Z (310 aa).

Residues histidine 63, histidine 65, aspartate 67, histidine 68, histidine 141, aspartate 212, and histidine 270 each contribute to the Zn(2+) site. The active-site Proton acceptor is the aspartate 67.

This sequence belongs to the RNase Z family. In terms of assembly, homodimer. It depends on Zn(2+) as a cofactor.

It carries out the reaction Endonucleolytic cleavage of RNA, removing extra 3' nucleotides from tRNA precursor, generating 3' termini of tRNAs. A 3'-hydroxy group is left at the tRNA terminus and a 5'-phosphoryl group is left at the trailer molecule.. In terms of biological role, zinc phosphodiesterase, which displays some tRNA 3'-processing endonuclease activity. Probably involved in tRNA maturation, by removing a 3'-trailer from precursor tRNA. The chain is Ribonuclease Z from Limosilactobacillus fermentum (strain NBRC 3956 / LMG 18251) (Lactobacillus fermentum).